A 131-amino-acid polypeptide reads, in one-letter code: Profilin (131 aa).

C13 and C115 are disulfide-bonded. Residues A81–T97 carry the Involved in PIP2 interaction motif. T111 bears the Phosphothreonine mark.

This sequence belongs to the profilin family. In terms of assembly, occurs in many kinds of cells as a complex with monomeric actin in a 1:1 ratio.

It localises to the cytoplasm. The protein localises to the cytoskeleton. Functionally, binds to actin and affects the structure of the cytoskeleton. At high concentrations, profilin prevents the polymerization of actin, whereas it enhances it at low concentrations. This Phoenix dactylifera (Date palm) protein is Profilin.